Reading from the N-terminus, the 83-residue chain is Arminin 3b (83 aa).

The N-terminal stretch at 1 to 18 is a signal peptide; it reads MKIVFAILFLTFIALTYA. Positions 19–57 are excised as a propeptide; the sequence is RSFEDLKEEIKNEIEKEIFDDLEEESDELDNNVKKFNDA. A Serine amide modification is found at serine 80.

The protein belongs to the arminin family. As to expression, expressed in entodermal epithelium along the body column.

It is found in the secreted. It localises to the target cell membrane. Antimicrobial peptide with a broad-spectrum antimicrobial activity. Keeps its antibacterial activity under a wide range of salt concentrations that mimic physiological conditions of human blood, which is surprising, since Hydra is an obligate freshwater animal with nearly no salt tolerance. Does not affect red blood cells. In Hydra vulgaris (Hydra), this protein is Arminin 3b.